Reading from the N-terminus, the 613-residue chain is Dihydroxy-acid dehydratase (613 aa).

D81 lines the Mg(2+) pocket. C122 provides a ligand contact to [2Fe-2S] cluster. Mg(2+) is bound by residues D123 and K124. K124 is subject to N6-carboxylysine. C193 is a binding site for [2Fe-2S] cluster. E489 provides a ligand contact to Mg(2+). The active-site Proton acceptor is the S515.

The protein belongs to the IlvD/Edd family. In terms of assembly, homodimer. [2Fe-2S] cluster serves as cofactor. The cofactor is Mg(2+).

The catalysed reaction is (2R)-2,3-dihydroxy-3-methylbutanoate = 3-methyl-2-oxobutanoate + H2O. It carries out the reaction (2R,3R)-2,3-dihydroxy-3-methylpentanoate = (S)-3-methyl-2-oxopentanoate + H2O. It participates in amino-acid biosynthesis; L-isoleucine biosynthesis; L-isoleucine from 2-oxobutanoate: step 3/4. The protein operates within amino-acid biosynthesis; L-valine biosynthesis; L-valine from pyruvate: step 3/4. Functions in the biosynthesis of branched-chain amino acids. Catalyzes the dehydration of (2R,3R)-2,3-dihydroxy-3-methylpentanoate (2,3-dihydroxy-3-methylvalerate) into 2-oxo-3-methylpentanoate (2-oxo-3-methylvalerate) and of (2R)-2,3-dihydroxy-3-methylbutanoate (2,3-dihydroxyisovalerate) into 2-oxo-3-methylbutanoate (2-oxoisovalerate), the penultimate precursor to L-isoleucine and L-valine, respectively. The polypeptide is Dihydroxy-acid dehydratase (Pseudomonas putida (strain GB-1)).